We begin with the raw amino-acid sequence, 75 residues long: Sec-independent protein translocase protein TatA (75 aa).

A helical transmembrane segment spans residues 1–21 (MGGFSIWHWLIVLVIVLLVFG). A disordered region spans residues 41-75 (KGMHDDDKPAGKLGDDSRTAEQAREAQAERDRDAR).

This sequence belongs to the TatA/E family. In terms of assembly, the Tat system comprises two distinct complexes: a TatABC complex, containing multiple copies of TatA, TatB and TatC subunits, and a separate TatA complex, containing only TatA subunits. Substrates initially bind to the TatABC complex, which probably triggers association of the separate TatA complex to form the active translocon.

Its subcellular location is the cell inner membrane. In terms of biological role, part of the twin-arginine translocation (Tat) system that transports large folded proteins containing a characteristic twin-arginine motif in their signal peptide across membranes. TatA could form the protein-conducting channel of the Tat system. The chain is Sec-independent protein translocase protein TatA from Xanthomonas axonopodis pv. citri (strain 306).